The following is a 416-amino-acid chain: UDP-N-acetylmuramoylalanine--D-glutamate ligase (416 aa).

104–110 lines the ATP pocket; it reads GSNGKST.

The protein belongs to the MurCDEF family.

The protein localises to the cytoplasm. The enzyme catalyses UDP-N-acetyl-alpha-D-muramoyl-L-alanine + D-glutamate + ATP = UDP-N-acetyl-alpha-D-muramoyl-L-alanyl-D-glutamate + ADP + phosphate + H(+). The protein operates within cell wall biogenesis; peptidoglycan biosynthesis. Cell wall formation. Catalyzes the addition of glutamate to the nucleotide precursor UDP-N-acetylmuramoyl-L-alanine (UMA). In Francisella tularensis subsp. mediasiatica (strain FSC147), this protein is UDP-N-acetylmuramoylalanine--D-glutamate ligase.